The primary structure comprises 579 residues: Arginine--tRNA ligase (579 aa).

Positions A127–H137 match the 'HIGH' region motif.

Belongs to the class-I aminoacyl-tRNA synthetase family. In terms of assembly, monomer.

Its subcellular location is the cytoplasm. It carries out the reaction tRNA(Arg) + L-arginine + ATP = L-arginyl-tRNA(Arg) + AMP + diphosphate. The protein is Arginine--tRNA ligase of Acidithiobacillus ferrooxidans (strain ATCC 23270 / DSM 14882 / CIP 104768 / NCIMB 8455) (Ferrobacillus ferrooxidans (strain ATCC 23270)).